A 227-amino-acid polypeptide reads, in one-letter code: ATP-dependent dethiobiotin synthetase BioD (227 aa).

An ATP-binding site is contributed by Asp-13–Tyr-18. Thr-17 contributes to the Mg(2+) binding site. The active site involves Lys-38. Position 42 (Ser-42) interacts with substrate. Residues Asp-55, Glu-116–Gly-119, and Asn-179–Asn-180 contribute to the ATP site. Positions 55 and 116 each coordinate Mg(2+).

It belongs to the dethiobiotin synthetase family. As to quaternary structure, homodimer. It depends on Mg(2+) as a cofactor.

The protein resides in the cytoplasm. The catalysed reaction is (7R,8S)-7,8-diammoniononanoate + CO2 + ATP = (4R,5S)-dethiobiotin + ADP + phosphate + 3 H(+). It participates in cofactor biosynthesis; biotin biosynthesis; biotin from 7,8-diaminononanoate: step 1/2. Its function is as follows. Catalyzes a mechanistically unusual reaction, the ATP-dependent insertion of CO2 between the N7 and N8 nitrogen atoms of 7,8-diaminopelargonic acid (DAPA, also called 7,8-diammoniononanoate) to form a ureido ring. This Clostridium botulinum (strain Alaska E43 / Type E3) protein is ATP-dependent dethiobiotin synthetase BioD.